The chain runs to 642 residues: Transcription factor 4 (642 aa).

Positions 1 to 25 (MFSPPVSSGKNGPTSLASGHFTGSN) are enriched in polar residues. Residues 1 to 59 (MFSPPVSSGKNGPTSLASGHFTGSNVEDRSSSGSWGNGGHPSPSRNYGDGTPYDHMTSR) are essential for MYOD1 inhibition. Disordered stretches follow at residues 1–296 (MFSP…SQTG), 311–354 (HTNN…EGPL), 444–545 (PNQV…MANN), and 609–642 (KRRE…MGQM). Serine 42, serine 63, and serine 68 each carry phosphoserine. Polar residues-rich tracts occupy residues 83–98 (GSYS…QGCH), 112–130 (GTLS…SSNN), 181–191 (PAASTFPSSFF), 218–230 (GSSS…SSYC), and 241–281 (PSHS…TDSI). Residues 312–323 (TNNSFSSNPSTP) are compositionally biased toward low complexity. Over residues 340–349 (NGGQASSSPN) the composition is skewed to polar residues. The residue at position 347 (serine 347) is a Phosphoserine. Residues 354–375 (LHSLQSRIEDRLERLDDAIHVL) are leucine-zipper. 2 stretches are compositionally biased toward low complexity: residues 444 to 455 (PNQVPVPQLPVQ) and 478 to 487 (GQSVSSGSSE). A Phosphoserine modification is found at serine 490. Composition is skewed to basic and acidic residues over residues 502-517 (KSSE…KDIK) and 530-545 (PEQK…MANN). Positions 539 to 592 (ERRMANNARERLRVRDINEAFKELGRMVQLHLKSDKPQTKLLILHQAVAVILSL) constitute a bHLH domain. Residues 594 to 617 (QQVRERNLNPKAACLKRREEEKVS) form a class A specific domain region.

In terms of assembly, efficient DNA binding requires dimerization with another bHLH protein. Forms homo- or heterooligomers with myogenin. Interacts with HIVEP2. Interacts with NEUROD2. Interacts with AGBL1. Widely expressed.

The protein localises to the nucleus. In terms of biological role, transcription factor that binds to the immunoglobulin enhancer Mu-E5/KE5-motif. Involved in the initiation of neuronal differentiation. Activates transcription by binding to the E box (5'-CANNTG-3'). Binds to the thyroglobulin promoter. This Canis lupus familiaris (Dog) protein is Transcription factor 4 (TCF4).